Consider the following 106-residue polypeptide: UPF0060 membrane protein Rleg2_1018 (106 aa).

4 consecutive transmembrane segments (helical) span residues 4–24, 30–50, 58–78, and 86–106; these read IIYAFAAVFEIGGCFAFWAWL, VWWLAPGMVSLALFAWLLTLV, TFAAYGGIYIAASLLWLWLVE, and DIGGALVCLAGTSIILFGPRG.

It belongs to the UPF0060 family.

The protein resides in the cell inner membrane. This Rhizobium leguminosarum bv. trifolii (strain WSM2304) protein is UPF0060 membrane protein Rleg2_1018.